A 261-amino-acid polypeptide reads, in one-letter code: MELKIGRAIISHALKDLDEYSDVDVAIVGAGPAGLTAARYLAEKGLKVVVYERRFSFGGGIGPGGNMLPKIVVQEEAVPILRDFKVRYKPAEDGLYTVDPAELIAKLAAGAVDAGAKIILGVHVDDVIFRGDPPRVTGLLWIWTPIQMSGMHVDPLYTQAKAVIDATGHDAEVVSVAARKVPELGIQVVGEKSAWSEVSEKLVVEHTGRVAPGLYVAGIAVCAVYGLPRMGPIFGGMLMSGKKVAEVVYKDLMAEAHAVRA.

NAD(+)-binding positions include A33, 52 to 53, G60, V124, and 152 to 154; these read ER and HVD. 2 residues coordinate Fe cation: D154 and H169. I219 contacts NAD(+). A glycine-binding site is contributed by R229.

The protein belongs to the THI4 family. Homooctamer; tetramer of dimers. Fe(2+) is required as a cofactor.

The catalysed reaction is hydrogen sulfide + glycine + NAD(+) = ADP-5-ethyl-4-methylthiazole-2-carboxylate + nicotinamide + 3 H2O + H(+). It participates in cofactor biosynthesis; thiamine diphosphate biosynthesis. Functionally, involved in the biosynthesis of the thiazole moiety of thiamine. Catalyzes the conversion of NAD and glycine to adenosine diphosphate 5-(2-hydroxyethyl)-4-methylthiazole-2-carboxylate (ADT), an adenylated thiazole intermediate, using free sulfide as a source of sulfur. This Pyrobaculum aerophilum (strain ATCC 51768 / DSM 7523 / JCM 9630 / CIP 104966 / NBRC 100827 / IM2) protein is Thiamine thiazole synthase.